The chain runs to 158 residues: Arginine repressor (158 aa).

The protein belongs to the ArgR family.

It is found in the cytoplasm. Its pathway is amino-acid biosynthesis; L-arginine biosynthesis [regulation]. In terms of biological role, regulates arginine biosynthesis genes. The chain is Arginine repressor from Phocaeicola vulgatus (strain ATCC 8482 / DSM 1447 / JCM 5826 / CCUG 4940 / NBRC 14291 / NCTC 11154) (Bacteroides vulgatus).